We begin with the raw amino-acid sequence, 705 residues long: Calpastatin (705 aa).

Disordered stretches follow at residues 1 to 211 and 226 to 493; these read MNPT…PNDA and LTTC…PLPP. Basic and acidic residues-rich tracts occupy residues 7 to 17 and 24 to 62; these read KAVKTEPEKKP and VVHEKKTQEVKPKEHTEPKSLPKHSSDTGVKHAPKEKAV. A Glycyl lysine isopeptide (Lys-Gly) (interchain with G-Cter in SUMO2) cross-link involves residue lysine 10. Lysine 28 carries the post-translational modification N6-acetyllysine. 2 stretches are compositionally biased toward low complexity: residues 63 to 72 and 94 to 103; these read SKSSEQPPSE and PAAAAAASAE. The residue at position 65 (serine 65) is a Phosphoserine. Threonine 115 carries the post-translational modification Phosphothreonine. Residues 135–151 show a composition bias toward acidic residues; sequence TALDDLIDTLGEPEEMK. An Inhibitory domain 1 repeat occupies 149 to 202; it reads EMKEDNTTYTGPEVSDPMSSTYIEELGKRESTPPPKYKELLNKEEGIAGPPPDS. Over residues 173–194 the composition is skewed to basic and acidic residues; that stretch reads ELGKRESTPPPKYKELLNKEEG. Phosphoserine is present on residues serine 202 and serine 230. Basic and acidic residues predominate over residues 234-248; sequence DGKETEKEKSTEEAL. Positions 275 to 286 are enriched in polar residues; the sequence is TEQALQALSASL. Basic and acidic residues-rich tracts occupy residues 289-317 and 327-352; these read RKPEPELDPSSIREVDEAKAKEEKVKKCG and YRLKPATDKDGKPLLPEAEEKPKPLS. An Inhibitory domain 2 repeat occupies 292–344; sequence EPELDPSSIREVDEAKAKEEKVKKCGEDEETVPSEYRLKPATDKDGKPLLPEA. Phosphoserine is present on residues serine 352, serine 354, and serine 361. Over residues 355–364 the composition is skewed to acidic residues; sequence ELIDELSEDF. The segment covering 365 to 381 has biased composition (basic and acidic residues); that stretch reads DQSKPTEKQSKPTEKTE. Position 428 is a phosphoserine (serine 428). A compositionally biased stretch (basic and acidic residues) spans 430–489; sequence PKKEADPEDGKPVEDKVKEKAKEEDRENFGEKEETIPPDYRLEEAKDKDGKPLLPKEVKE. An Inhibitory domain 3 repeat occupies 434-487; that stretch reads ADPEDGKPVEDKVKEKAKEEDRENFGEKEETIPPDYRLEEAKDKDGKPLLPKEV. 2 positions are modified to phosphoserine: serine 504 and serine 515. The tract at residues 527 to 705 is disordered; it reads VSEVVSQTPA…KPKADGKSTS (179 aa). The segment covering 533–542 has biased composition (low complexity); that stretch reads QTPAPTTQAA. Residue serine 563 is modified to Phosphoserine. The stretch at 571-624 is one Inhibitory domain 4 repeat; sequence PDPDENKPVEDKVKEKAKAEHRDKLGERDDTIPPKYQHLLDDNKEGTPGKPKDQ. Residues 571-625 are compositionally biased toward basic and acidic residues; it reads PDPDENKPVEDKVKEKAKAEHRDKLGERDDTIPPKYQHLLDDNKEGTPGKPKDQR. The span at 651-662 shows a compositional bias: low complexity; that stretch reads DSCPSTTETSTD. A compositionally biased stretch (basic and acidic residues) spans 683-705; the sequence is KAKDSTKAKEETSKPKADGKSTS.

This sequence belongs to the protease inhibitor I27 (calpastatin) family.

In terms of biological role, specific inhibition of calpain (calcium-dependent cysteine protease). Plays a key role in postmortem tenderization of meat and have been proposed to be involved in muscle protein degradation in living tissue. This Bos taurus (Bovine) protein is Calpastatin (CAST).